The sequence spans 173 residues: uncharacterized protein (173 aa).

This is an uncharacterized protein from Saccharomyces cerevisiae (strain ATCC 204508 / S288c) (Baker's yeast).